Consider the following 313-residue polypeptide: Aspartate carbamoyltransferase catalytic subunit (313 aa).

The carbamoyl phosphate site is built by R59 and T60. K87 lines the L-aspartate pocket. Residues R109, H137, and Q140 each coordinate carbamoyl phosphate. R170 and R224 together coordinate L-aspartate. Positions 265 and 266 each coordinate carbamoyl phosphate.

It belongs to the aspartate/ornithine carbamoyltransferase superfamily. ATCase family. In terms of assembly, heterododecamer (2C3:3R2) of six catalytic PyrB chains organized as two trimers (C3), and six regulatory PyrI chains organized as three dimers (R2).

The catalysed reaction is carbamoyl phosphate + L-aspartate = N-carbamoyl-L-aspartate + phosphate + H(+). Its pathway is pyrimidine metabolism; UMP biosynthesis via de novo pathway; (S)-dihydroorotate from bicarbonate: step 2/3. Its function is as follows. Catalyzes the condensation of carbamoyl phosphate and aspartate to form carbamoyl aspartate and inorganic phosphate, the committed step in the de novo pyrimidine nucleotide biosynthesis pathway. This is Aspartate carbamoyltransferase catalytic subunit from Rhizobium meliloti (strain 1021) (Ensifer meliloti).